A 702-amino-acid polypeptide reads, in one-letter code: Vertnin (702 aa).

Residues 562–625 (VPTLGKGGQE…QGQPHSGPLL (64 aa)) are disordered. Over residues 570–582 (QEAEEKQEKEAGR) the composition is skewed to basic and acidic residues.

This sequence belongs to the vertnin family.

It is found in the nucleus. In terms of biological role, acts as a transcription factor that regulates development of thoracic vertebrae. The chain is Vertnin from Homo sapiens (Human).